Here is a 414-residue protein sequence, read N- to C-terminus: Probable solanesyl-diphosphate synthase 3, chloroplastic (414 aa).

Low complexity predominate over residues Met-1 to Pro-23. The interval Met-1 to Arg-36 is disordered. The N-terminal 72 residues, Met-1–Pro-72, are a transit peptide targeting the chloroplast. Residues Ser-24–Gln-35 show a composition bias toward pro residues. Isopentenyl diphosphate is bound by residues Lys-134, Arg-137, and His-172. Mg(2+) contacts are provided by Asp-179 and Asp-183. Arg-188 serves as a coordination point for an all-trans-polyprenyl diphosphate. Arg-189 contacts isopentenyl diphosphate. Residues Lys-265, Thr-266, Gln-303, and Lys-320 each coordinate an all-trans-polyprenyl diphosphate.

It belongs to the FPP/GGPP synthase family. As to quaternary structure, homodimer. Mg(2+) is required as a cofactor.

The protein resides in the plastid. It localises to the chloroplast. The catalysed reaction is 7 isopentenyl diphosphate + (2E)-geranyl diphosphate = all-trans-nonaprenyl diphosphate + 7 diphosphate. Its function is as follows. Involved in providing solanesyl diphosphate for plastoquinone-9 (PQ-9) formation. This is Probable solanesyl-diphosphate synthase 3, chloroplastic from Oryza sativa subsp. japonica (Rice).